The chain runs to 302 residues: tRNA pseudouridine synthase B (302 aa).

Catalysis depends on Asp40, which acts as the Nucleophile.

Belongs to the pseudouridine synthase TruB family. Type 1 subfamily.

It carries out the reaction uridine(55) in tRNA = pseudouridine(55) in tRNA. Its function is as follows. Responsible for synthesis of pseudouridine from uracil-55 in the psi GC loop of transfer RNAs. This chain is tRNA pseudouridine synthase B, found in Shouchella clausii (strain KSM-K16) (Alkalihalobacillus clausii).